The primary structure comprises 696 residues: ATP-dependent zinc metalloprotease FtsH (696 aa).

Topologically, residues 1–29 are cytoplasmic; that stretch reads MWLQVTNCSTLHSSLSYCGANTLSDMAKN. The chain crosses the membrane as a helical span at residues 30-50; the sequence is LILWLVIAVVLMSVFQSFGPS. The Periplasmic segment spans residues 51 to 124; the sequence is DSAGRQVDYT…LGTPPEEPSL (74 aa). Residues 125-145 form a helical membrane-spanning segment; it reads LASIFISWFPMLLLIGVWVFF. The Cytoplasmic segment spans residues 146 to 696; that stretch reads MRQMQGGGGG…APKEDDKPQA (551 aa). 219–226 contacts ATP; it reads GPPGTGKT. A Zn(2+)-binding site is contributed by His441. Glu442 is a catalytic residue. The Zn(2+) site is built by His445 and Asp519. A disordered region spans residues 627–696; that stretch reads RAPKGWGDTD…APKEDDKPQA (70 aa). The segment covering 650 to 696 has biased composition (basic and acidic residues); it reads PEAKTESAPEAKAEANVETEEKPVAADSEELKPKAEQAPKEDDKPQA.

This sequence in the central section; belongs to the AAA ATPase family. In the C-terminal section; belongs to the peptidase M41 family. In terms of assembly, homohexamer. The cofactor is Zn(2+).

It localises to the cell inner membrane. Functionally, acts as a processive, ATP-dependent zinc metallopeptidase for both cytoplasmic and membrane proteins. Plays a role in the quality control of integral membrane proteins. In Photobacterium profundum (strain SS9), this protein is ATP-dependent zinc metalloprotease FtsH.